A 293-amino-acid chain; its full sequence is Phosphate import ATP-binding protein PstB (293 aa).

Residues 46-288 form the ABC transporter domain; that stretch reads FGIRGVDVFY…PDHELTEAYI (243 aa). An ATP-binding site is contributed by 78-85; sequence GPSGCGKS.

Belongs to the ABC transporter superfamily. Phosphate importer (TC 3.A.1.7) family. The complex is composed of two ATP-binding proteins (PstB), two transmembrane proteins (PstC and PstA) and a solute-binding protein (PstS).

Its subcellular location is the cell inner membrane. It catalyses the reaction phosphate(out) + ATP + H2O = ADP + 2 phosphate(in) + H(+). In terms of biological role, part of the ABC transporter complex PstSACB involved in phosphate import. Responsible for energy coupling to the transport system. The polypeptide is Phosphate import ATP-binding protein PstB (Saccharophagus degradans (strain 2-40 / ATCC 43961 / DSM 17024)).